Consider the following 681-residue polypeptide: MAPRVFRRQTLERCLREIRKATNRPECFLTIQNGLASNFTSLTKVLYDFNKVLENGRISGSPLQKLEINSFDDEQIWQQLELQNEPVLQYFQNAVSETVEDEDISLLPECEDEECEEDASEVEADNQENLETDLDEEQLSDEGGDVPKGRDRAKSSRKSDPRKSPVFSDEDSDLDFDIGKLEQQTKMQIKPPGKPREKSVVDDKFFKLSEMESFLEKVEKEEEKRPDGEEEDEEDIDLFEDIDSDESEGGLFGRQKIKSNKSSRNLKYKDFFDPVESDEDITGVDEELGPDEEKEEEEGFAEEADESISDTDEDNDLEEDENSDQHKGSLKRVTFALPDDEAEDTSPLAVKQESDEVKSSFEKRQEKMNEKIASLEKELLDKKPWQLQGEVTAQKRPENSLLEETLHFDHAVRMAPVITEETTLHLEDIIKQRIRDQAWDDVERKEKPKEDAYEYKKRLTLDHEKSKLSLAEIYEQEYLKLNQQKTEEEDNPEHVEIQKMMDSLFLKLDALSNFHFIPKPPVPEIKVVSNLPAITMEEVAPVSVSDAALLAPEEIKEKNKAGDLKTAAEKTATDKKRERRKKKYQKRLKIKEKEKRKKLLEKNNPDQSKSSRAAASEKLKQLTKTGKVSLLKDERKDKPLKSSQAFFSKLQDQVKMQINDAKQPEKIKKKKQDISVHKLKL.

Residues serine 61, serine 120, and serine 140 each carry the phosphoserine modification. Positions 109–139 (ECEDEECEEDASEVEADNQENLETDLDEEQL) form a coiled coil. Residues 111-144 (EDEECEEDASEVEADNQENLETDLDEEQLSDEGG) are compositionally biased toward acidic residues. Disordered regions lie at residues 111–202 (EDEE…SVVD), 215–256 (LEKV…GRQK), and 268–365 (YKDF…EKRQ). Positions 145 to 163 (DVPKGRDRAKSSRKSDPRK) are enriched in basic and acidic residues. 3 positions are modified to phosphoserine: serine 164, serine 168, and serine 172. Residues 215-227 (LEKVEKEEEKRPD) show a composition bias toward basic and acidic residues. Acidic residues-rich tracts occupy residues 228–248 (GEEEDEEDIDLFEDIDSDESE) and 273–322 (DPVE…EDEN). 4 positions are modified to phosphoserine: serine 244, serine 247, serine 277, and serine 346. The stretch at 349 to 383 (AVKQESDEVKSSFEKRQEKMNEKIASLEKELLDKK) forms a coiled coil. Lysine 351 participates in a covalent cross-link: Glycyl lysine isopeptide (Lys-Gly) (interchain with G-Cter in SUMO2). Residues 352-365 (QESDEVKSSFEKRQ) are compositionally biased toward basic and acidic residues. Residues lysine 383 and lysine 395 each participate in a glycyl lysine isopeptide (Lys-Gly) (interchain with G-Cter in SUMO2) cross-link. A coiled-coil region spans residues 471–491 (AEIYEQEYLKLNQQKTEEEDN). Residue lysine 556 forms a Glycyl lysine isopeptide (Lys-Gly) (interchain with G-Cter in SUMO2) linkage. A compositionally biased stretch (basic and acidic residues) spans 560 to 576 (KAGDLKTAAEKTATDKK). Positions 560–644 (KAGDLKTAAE…RKDKPLKSSQ (85 aa)) are disordered. Residues 575–604 (KKRERRKKKYQKRLKIKEKEKRKKLLEKNN) adopt a coiled-coil conformation. Residues 577–599 (RERRKKKYQKRLKIKEKEKRKKL) are compositionally biased toward basic residues. Lysine 609 carries the post-translational modification N6-acetyllysine. Positions 630 to 640 (LLKDERKDKPL) are enriched in basic and acidic residues. Glycyl lysine isopeptide (Lys-Gly) (interchain with G-Cter in SUMO2) cross-links involve residues lysine 632 and lysine 649. Residues 657 to 681 (QINDAKQPEKIKKKKQDISVHKLKL) are disordered. Residues 662–681 (KQPEKIKKKKQDISVHKLKL) show a composition bias toward basic and acidic residues.

The protein belongs to the MPP10 family. Part of the small subunit (SSU) processome, composed of more than 70 proteins and the RNA chaperone small nucleolar RNA (snoRNA) U3. Component of a heterotrimeric complex containing IMP3, IMP4 and MPHOSPH10. Interacts with IMP3 and IMP4. Post-translationally, phosphorylated in M (mitotic) phase.

Its subcellular location is the nucleus. The protein resides in the nucleolus. It is found in the chromosome. Functionally, component of the 60-80S U3 small nucleolar ribonucleoprotein (U3 snoRNP). Required for the early cleavages during pre-18S ribosomal RNA processing. Part of the small subunit (SSU) processome, first precursor of the small eukaryotic ribosomal subunit. During the assembly of the SSU processome in the nucleolus, many ribosome biogenesis factors, an RNA chaperone and ribosomal proteins associate with the nascent pre-rRNA and work in concert to generate RNA folding, modifications, rearrangements and cleavage as well as targeted degradation of pre-ribosomal RNA by the RNA exosome. The polypeptide is U3 small nucleolar ribonucleoprotein protein MPP10 (Mphosph10) (Mus musculus (Mouse)).